A 100-amino-acid chain; its full sequence is Small ribosomal subunit protein uS14c (100 aa).

It belongs to the universal ribosomal protein uS14 family. In terms of assembly, part of the 30S ribosomal subunit.

The protein resides in the plastid. It is found in the chloroplast. Binds 16S rRNA, required for the assembly of 30S particles. This Tetradesmus obliquus (Green alga) protein is Small ribosomal subunit protein uS14c.